The following is a 465-amino-acid chain: Alpha-galacturonidase (465 aa).

11 to 78 contacts NAD(+); the sequence is ITIAYIGGGS…GKWLYKACET (68 aa). Asparagine 157 is a binding site for substrate. Cysteine 179 is a binding site for Mn(2+). Histidine 180 acts as the Proton donor in catalysis. Histidine 216 is a Mn(2+) binding site.

It belongs to the glycosyl hydrolase 4 family. As to quaternary structure, homotetramer. NAD(+) serves as cofactor. Mn(2+) is required as a cofactor.

The catalysed reaction is [(1-&gt;4)-alpha-D-galacturonosyl](n) + H2O = alpha-D-galacturonate + [(1-&gt;4)-alpha-D-galacturonosyl](n-1). Alpha-galacturonidase able to catalyze the hydrolysis of the chromogenic substrate p-nitrophenyl-alpha-D-galacturonic acid (pNPalphaGalUA). It is probable that alpha-1,4-di-galacturonate (GalUA(2)) is the naturally occurring substrate. The protein is Alpha-galacturonidase of Thermoanaerobacterium saccharolyticum (strain DSM 8691 / JW/SL-YS485).